Reading from the N-terminus, the 254-residue chain is Vesicle transport protein USE1 (254 aa).

Topologically, residues 1–228 (MAYISENELK…AYKCGYDCFK (228 aa)) are cytoplasmic. A helical; Anchor for type IV membrane protein transmembrane segment spans residues 229-249 (VMLIVLIFMSFVSMVLMMKIF). The Lumenal segment spans residues 250–254 (KKAST).

This sequence belongs to the USE1 family.

Its subcellular location is the endoplasmic reticulum membrane. In terms of biological role, SNARE that may be involved in targeting and fusion of Golgi-derived retrograde transport vesicles with the ER. The protein is Vesicle transport protein USE1 of Caenorhabditis elegans.